The sequence spans 161 residues: Cyclic pyranopterin monophosphate synthase (161 aa).

Substrate contacts are provided by residues 75 to 77 and 113 to 114; these read LCH and ME. Aspartate 128 is an active-site residue.

The protein belongs to the MoaC family. Homohexamer; trimer of dimers.

It catalyses the reaction (8S)-3',8-cyclo-7,8-dihydroguanosine 5'-triphosphate = cyclic pyranopterin phosphate + diphosphate. It participates in cofactor biosynthesis; molybdopterin biosynthesis. Its function is as follows. Catalyzes the conversion of (8S)-3',8-cyclo-7,8-dihydroguanosine 5'-triphosphate to cyclic pyranopterin monophosphate (cPMP). The polypeptide is Cyclic pyranopterin monophosphate synthase (Salmonella dublin (strain CT_02021853)).